We begin with the raw amino-acid sequence, 140 residues long: L-fucose mutarotase (140 aa).

The active-site Proton donor is the histidine 22. Substrate is bound by residues aspartate 30, arginine 107, and tyrosine 129–asparagine 131.

The protein belongs to the RbsD / FucU family. FucU mutarotase subfamily. Homodecamer.

The protein localises to the cytoplasm. It catalyses the reaction alpha-L-fucose = beta-L-fucose. Its pathway is carbohydrate metabolism; L-fucose metabolism. Its function is as follows. Involved in the anomeric conversion of L-fucose. In Salmonella paratyphi B (strain ATCC BAA-1250 / SPB7), this protein is L-fucose mutarotase.